Reading from the N-terminus, the 744-residue chain is CCR4-NOT transcription complex subunit 10 (744 aa).

Basic and acidic residues predominate over residues 1–16; sequence MAADKPADQGAEKHEG. Residues 1–25 form a disordered region; it reads MAADKPADQGAEKHEGTGQSSGITD. At Ala2 the chain carries N-acetylalanine. Residues 74-107 are a coiled coil; sequence KSNQTTTDNLRQTLNQLKNQVHSAVEEMDGLDDV. Low complexity predominate over residues 183–199; it reads NNNKNGKNETGNNNNKD. Disordered regions lie at residues 183–204, 477–521, and 602–634; these read NNNK…SNHK, QDPK…PPSS, and VSLG…PQCY. Positions 484-495 are enriched in polar residues; sequence GAKNSNQLGGNT. Residues 496 to 506 show a composition bias toward low complexity; sequence ESSESSETCSS. Polar residues predominate over residues 602–612; it reads VSLGISSNEQD.

This sequence belongs to the CNOT10 family. Component of the CCR4-NOT complex; distinct complexes seem to exist that differ in the participation of probably mutually exclusive catalytic subunits. CNOT10 and CNOT11 form a subcomplex docked to the CNOT1 scaffold.

It localises to the cytoplasm. The protein localises to the nucleus. In terms of biological role, component of the CCR4-NOT complex which is one of the major cellular mRNA deadenylases and is linked to various cellular processes including bulk mRNA degradation, miRNA-mediated repression, translational repression during translational initiation and general transcription regulation. Additional complex functions may be a consequence of its influence on mRNA expression. Is not required for association of CNOT7 to the CCR4-NOT complex. This chain is CCR4-NOT transcription complex subunit 10 (CNOT10), found in Homo sapiens (Human).